A 305-amino-acid polypeptide reads, in one-letter code: MKQLQVLLVAGTHGNEINGIWLFDEWKKSSFLINTHGIKTFKVIGNPEAKKAGKRYIHHDLNRSFKEESFIKINPLNCERTRASELVNLYGEAGENPCQIALDFHTTTASMGSCIVVYGRRDADLALASLIQNQLGLPVYLHESDQKQTGFLVESWPCGLVVEIGPIGQGLLNSRIISQTKLILETLMEQIHEVKNLNLFFPNKLIIHRHIKSIDFPRDEEGNIDGYVHSLRQSKDWQELKKNDELFCKLNGEIIRFEEDEPYIPVFINEAAYVEKNIAMSFTKRELWNFKKEWKQALIDLIHQK.

Zn(2+) is bound by residues His13 and Glu16. Residues Arg55 and 62-63 (NR) each bind substrate. His105 is a binding site for Zn(2+). Residues Glu163 and Tyr273 each coordinate substrate.

It belongs to the AspA/AstE family. Aspartoacylase subfamily. Zn(2+) serves as cofactor.

The enzyme catalyses an N-acyl-L-aspartate + H2O = a carboxylate + L-aspartate. The sequence is that of Probable aspartoacylase from Prochlorococcus marinus (strain NATL2A).